Here is a 693-residue protein sequence, read N- to C-terminus: Glycine--tRNA ligase beta subunit (693 aa).

The protein belongs to the class-II aminoacyl-tRNA synthetase family. As to quaternary structure, tetramer of two alpha and two beta subunits.

It is found in the cytoplasm. The catalysed reaction is tRNA(Gly) + glycine + ATP = glycyl-tRNA(Gly) + AMP + diphosphate. This chain is Glycine--tRNA ligase beta subunit, found in Shouchella clausii (strain KSM-K16) (Alkalihalobacillus clausii).